The primary structure comprises 259 residues: Ribosomal RNA small subunit methyltransferase J (259 aa).

Residues 101 to 102 (RD), 117 to 118 (ER), 153 to 154 (SS), and aspartate 176 each bind S-adenosyl-L-methionine.

Belongs to the methyltransferase superfamily. RsmJ family.

The protein localises to the cytoplasm. The catalysed reaction is guanosine(1516) in 16S rRNA + S-adenosyl-L-methionine = N(2)-methylguanosine(1516) in 16S rRNA + S-adenosyl-L-homocysteine + H(+). Functionally, specifically methylates the guanosine in position 1516 of 16S rRNA. The polypeptide is Ribosomal RNA small subunit methyltransferase J (Vibrio vulnificus (strain CMCP6)).